Reading from the N-terminus, the 289-residue chain is Protein FraH (289 aa).

The DZANK-type zinc finger occupies 4–49 (CPNCNHPNPDGAVQCEACYTPLPATSNCPNCGATVQSDAAFCGQCG). A zinc finger lies at 18-48 (CEACYTPLPATSNCPNCGATVQSDAAFCGQC). Positions 204-260 (VHIGKPNDRIPPDVDVSGFANSEIVSRVHADIRLEGDAHYIEDVGSSNGTYINNLPL) constitute an FHA domain.

Putative heterocyst to vegetative cell connection. The polypeptide is Protein FraH (fraH) (Nostoc sp. (strain PCC 7120 / SAG 25.82 / UTEX 2576)).